A 322-amino-acid polypeptide reads, in one-letter code: UV DNA damage endonuclease (322 aa).

The protein belongs to the uve1/UvsE family.

Functionally, component in a DNA repair pathway. Removal of UV LIGHT damaged nucleotides. Recognizes pyrimidine dimers and cleave a phosphodiester bond immediately 5' to the lesion. This Halalkalibacterium halodurans (strain ATCC BAA-125 / DSM 18197 / FERM 7344 / JCM 9153 / C-125) (Bacillus halodurans) protein is UV DNA damage endonuclease.